An 844-amino-acid chain; its full sequence is Translation initiation factor IF-2 (844 aa).

A compositionally biased stretch (basic and acidic residues) spans 1-11 (MTEDVKADAPK). Disordered stretches follow at residues 1-48 (MTED…VKTD) and 79-249 (RLEA…GTAL). Residues 21–30 (TTVSSTTTGG) are compositionally biased toward low complexity. Residues 79-161 (RLEAEKAATK…AAEEAKRYAE (83 aa)) show a composition bias toward basic and acidic residues. Acidic residues predominate over residues 162-175 (ADDSDNESSSEDYS). Residues 200 to 210 (RGKNKVAKAKK) show a composition bias toward basic residues. The span at 211-237 (GGRDDENSKNSKNERESNRKNQKDAKF) shows a compositional bias: basic and acidic residues. One can recognise a tr-type G domain in the interval 343–513 (TRAPVVTIMG…LLQSEVLELT (171 aa)). A G1 region spans residues 352–359 (GHVDHGKT). Residue 352–359 (GHVDHGKT) coordinates GTP. Positions 377-381 (GITQH) are G2. The tract at residues 399 to 402 (DTPG) is G3. GTP is bound by residues 399–403 (DTPGH) and 453–456 (NKID). The tract at residues 453-456 (NKID) is G4. Residues 489 to 491 (SAK) form a G5 region.

It belongs to the TRAFAC class translation factor GTPase superfamily. Classic translation factor GTPase family. IF-2 subfamily.

It localises to the cytoplasm. Functionally, one of the essential components for the initiation of protein synthesis. Protects formylmethionyl-tRNA from spontaneous hydrolysis and promotes its binding to the 30S ribosomal subunits. Also involved in the hydrolysis of GTP during the formation of the 70S ribosomal complex. The sequence is that of Translation initiation factor IF-2 from Haemophilus influenzae (strain 86-028NP).